The sequence spans 132 residues: Ribosome-binding factor A (132 aa).

The protein belongs to the RbfA family. As to quaternary structure, monomer. Binds 30S ribosomal subunits, but not 50S ribosomal subunits or 70S ribosomes.

It localises to the cytoplasm. One of several proteins that assist in the late maturation steps of the functional core of the 30S ribosomal subunit. Associates with free 30S ribosomal subunits (but not with 30S subunits that are part of 70S ribosomes or polysomes). Required for efficient processing of 16S rRNA. May interact with the 5'-terminal helix region of 16S rRNA. The polypeptide is Ribosome-binding factor A (Bordetella avium (strain 197N)).